Reading from the N-terminus, the 552-residue chain is MGSKEFYGGIEKSPNRSFLKAMGLTDKDISNGLVGVGVAWSESGPCNIHALSLGNKAAEGVSHSGMTPRLFATPLVIDGMAMGNEGMRYSLPSREVIANTVELTIKGHGFDAFVGISGCDKTTPGMLMGAARINVPSIVMYGGSTLPGYYMGKKIAVGDVYEAVGSYQAGRMTVEELKIMENSAVPTAGACGGLYTANTMAFMSEGLGMALTGSASPPAVDSGKTKFAFETGAAIKTLVENDIKPRDVMTYEAFENAITLLMASGGSTNVVLHLLAIAHEAHVNIKLDDFDRIGNKVPEIVNMKPGGPYTMAELNEIGGVPVVMKKLLDKGFLHGDVLTVTGKTLRENLNEIKILNIKQDIVYDIERPKMRTGGIKILRGNIAREGSVFKASASSVMKHTGPAKVFDGEEAAFRALMDNKIERGDVIVIRYEGPKGGPGMREMLAVTAAVVGKGFDRDVALITDGRFSGATRGIMIGHVAPEAFVGGEIALLKDGDVITIDGENGLLKASVSDEEFNRRRESWRPPEPKYSTGYLSQYAKLVGSASRGAVLE.

Residue cysteine 46 participates in [2Fe-2S] cluster binding. Aspartate 78 provides a ligand contact to Mg(2+). Cysteine 119 provides a ligand contact to [2Fe-2S] cluster. Aspartate 120 and lysine 121 together coordinate Mg(2+). N6-carboxylysine is present on lysine 121. Cysteine 191 serves as a coordination point for [2Fe-2S] cluster. Position 442 (glutamate 442) interacts with Mg(2+). The Proton acceptor role is filled by serine 468.

The protein belongs to the IlvD/Edd family. Homodimer. It depends on [2Fe-2S] cluster as a cofactor. Requires Mg(2+) as cofactor.

It carries out the reaction (2R)-2,3-dihydroxy-3-methylbutanoate = 3-methyl-2-oxobutanoate + H2O. It catalyses the reaction (2R,3R)-2,3-dihydroxy-3-methylpentanoate = (S)-3-methyl-2-oxopentanoate + H2O. It functions in the pathway amino-acid biosynthesis; L-isoleucine biosynthesis; L-isoleucine from 2-oxobutanoate: step 3/4. The protein operates within amino-acid biosynthesis; L-valine biosynthesis; L-valine from pyruvate: step 3/4. Its function is as follows. Functions in the biosynthesis of branched-chain amino acids. Catalyzes the dehydration of (2R,3R)-2,3-dihydroxy-3-methylpentanoate (2,3-dihydroxy-3-methylvalerate) into 2-oxo-3-methylpentanoate (2-oxo-3-methylvalerate) and of (2R)-2,3-dihydroxy-3-methylbutanoate (2,3-dihydroxyisovalerate) into 2-oxo-3-methylbutanoate (2-oxoisovalerate), the penultimate precursor to L-isoleucine and L-valine, respectively. This Picrophilus torridus (strain ATCC 700027 / DSM 9790 / JCM 10055 / NBRC 100828 / KAW 2/3) protein is Dihydroxy-acid dehydratase.